Here is a 464-residue protein sequence, read N- to C-terminus: Arginine biosynthesis bifunctional protein ArgJ, chloroplastic (464 aa).

Residues threonine 208, lysine 234, threonine 245, glutamate 332, asparagine 459, and threonine 464 each contribute to the substrate site. The active-site Nucleophile is the threonine 245.

It belongs to the ArgJ family. In terms of assembly, heterodimer of an alpha and a beta chain.

The protein resides in the plastid. It localises to the chloroplast. The enzyme catalyses N(2)-acetyl-L-ornithine + L-glutamate = N-acetyl-L-glutamate + L-ornithine. It carries out the reaction L-glutamate + acetyl-CoA = N-acetyl-L-glutamate + CoA + H(+). It participates in amino-acid biosynthesis; L-arginine biosynthesis; L-ornithine and N-acetyl-L-glutamate from L-glutamate and N(2)-acetyl-L-ornithine (cyclic): step 1/1. Its pathway is amino-acid biosynthesis; L-arginine biosynthesis; N(2)-acetyl-L-ornithine from L-glutamate: step 1/4. Its function is as follows. Catalyzes two activities which are involved in the cyclic version of arginine biosynthesis: the synthesis of acetylglutamate from glutamate and acetyl-CoA, and of ornithine by transacetylation between acetylornithine and glutamate. The chain is Arginine biosynthesis bifunctional protein ArgJ, chloroplastic from Zea mays (Maize).